A 472-amino-acid chain; its full sequence is Poly(A) polymerase catalytic subunit (472 aa).

Residues aspartate 194 and aspartate 196 contribute to the active site.

This sequence belongs to the poxviridae poly(A) polymerase catalytic subunit family. As to quaternary structure, heterodimer of a large (catalytic) subunit and a small (regulatory) subunit.

The enzyme catalyses RNA(n) + ATP = RNA(n)-3'-adenine ribonucleotide + diphosphate. Its function is as follows. Polymerase that creates the 3'-poly(A) tail of mRNA's. The sequence is that of Poly(A) polymerase catalytic subunit (PAPL) from Serinus (CNPV).